A 20-amino-acid chain; its full sequence is Disintegrin (20 aa).

Residues 1 to 20 (EAGEECDCGTPENPCCDAAT) form the Disintegrin domain. 2 cysteine pairs are disulfide-bonded: Cys-6–Cys-15 and Cys-8–Cys-16.

This sequence belongs to the venom metalloproteinase (M12B) family. P-II subfamily. P-IIa sub-subfamily. In terms of assembly, monomer. In terms of tissue distribution, expressed by the venom gland.

The protein localises to the secreted. Functionally, inhibits fibrinogen interaction with platelets. Acts by binding to alpha-IIb/beta-3 (ITGA2B/ITGB3) on the platelet surface and inhibits aggregation induced by ADP, thrombin, platelet-activating factor and collagen. This chain is Disintegrin, found in Bothrops fonsecai (Fonseca's lancehead).